The primary structure comprises 207 residues: Strobilurin A biosynthesis cluster protein r1 (207 aa).

The next 2 membrane-spanning stretches (helical) occupy residues 108-128 (FIFP…LLYL) and 169-189 (NLTT…PFWI).

The protein localises to the membrane. It functions in the pathway mycotoxin biosynthesis. Its function is as follows. Part of the gene cluster that mediates the biosynthesis of strobilurin A, an antifungal polyketide that contains a key beta-methoxyacrylate toxophore that targets the complex III of the mitochondrial electron transport chain. Strobilurin biosynthesis begins with construction of benzoyl CoA by step-wise elimination of ammonia from phenylalanine by the phenylalanine ammonia-lyase str11, oxygenation by str8 and retro-Claisen reaction to form benzoic acid, which is activated to its CoA thiolester benzoyl CoA by the dedicated CoA ligase str10. Benzoyl CoA forms the starter unit for the highly reducing polyketide synthase stpks1 that produces the polyketide prestrobilutin A. The FAD-dependent oxygenase str9 then catalyzes the key oxidative rearrangement responsible for the creation of the beta-methoxyacrylate toxophore. Str9 performs epoxidation of the 2,3 olefin of prestrobilutin A, followed by Meinwald rearrangement to furnish the aldehyde intermediate. Rapid enolization of the aldehyde intermediate would give the beta-methoxyacrylate skeleton and methylations catalyzed by str2 and str3 complete the synthesis and lead to the production of strobilurin A. The short-chain dehydrogenase stl2 and the dehydrogenase str4 play a role in the shunt pathway leading to the production of bolineol. The cluster encodes no obvious halogenase gene that could be involved in production of strobilurin B, nor any obvious dimethylallyl-transferase that could be involved in the production of strobilurin G. It is possible that unknown proteins encoded in, or near, the cluster (such as str1 or stl1) may form new classes of halogenases or dimethylally-transferases, or that the responsible genes are located elsewhere on the genome. Similarly, proteins encoded by str5/str6 hydrolases appear to have no chemical role in the biosynthesis of strobilurin A. Finally, no obvious self-resistance gene is found within the cluster. This is Strobilurin A biosynthesis cluster protein r1 from Strobilurus tenacellus.